The chain runs to 268 residues: Energy-coupling factor transporter transmembrane protein EcfT (268 aa).

Transmembrane regions (helical) follow at residues 28–48 (FVFLFIILIFFCHSPLTYLWV), 63–83 (LWFLIKGLTPIFFFLIFTLMM), 107–127 (ILEGLYISLRLIGIVMIATIM), 152–172 (LPVHQLSMIMSIALRFIPTLM), and 248–268 (ISLTMIIPIAIILFVLKYSGV).

It belongs to the energy-coupling factor EcfT family. As to quaternary structure, forms a stable energy-coupling factor (ECF) transporter complex composed of 2 membrane-embedded substrate-binding proteins (S component), 2 ATP-binding proteins (A component) and 2 transmembrane proteins (T component). May be able to interact with more than 1 S component at a time.

It is found in the cell membrane. In terms of biological role, transmembrane (T) component of an energy-coupling factor (ECF) ABC-transporter complex. Unlike classic ABC transporters this ECF transporter provides the energy necessary to transport a number of different substrates. The protein is Energy-coupling factor transporter transmembrane protein EcfT of Staphylococcus aureus (strain 04-02981).